The following is a 110-amino-acid chain: Large ribosomal subunit protein uL22 (110 aa).

It belongs to the universal ribosomal protein uL22 family. As to quaternary structure, part of the 50S ribosomal subunit.

Functionally, this protein binds specifically to 23S rRNA; its binding is stimulated by other ribosomal proteins, e.g. L4, L17, and L20. It is important during the early stages of 50S assembly. It makes multiple contacts with different domains of the 23S rRNA in the assembled 50S subunit and ribosome. Its function is as follows. The globular domain of the protein is located near the polypeptide exit tunnel on the outside of the subunit, while an extended beta-hairpin is found that lines the wall of the exit tunnel in the center of the 70S ribosome. In Vibrio cholerae serotype O1 (strain ATCC 39541 / Classical Ogawa 395 / O395), this protein is Large ribosomal subunit protein uL22.